We begin with the raw amino-acid sequence, 86 residues long: Large ribosomal subunit protein bL31B (86 aa).

It belongs to the bacterial ribosomal protein bL31 family. Type B subfamily. As to quaternary structure, part of the 50S ribosomal subunit.

In Cupriavidus metallidurans (strain ATCC 43123 / DSM 2839 / NBRC 102507 / CH34) (Ralstonia metallidurans), this protein is Large ribosomal subunit protein bL31B.